The following is a 374-amino-acid chain: SKP1-interacting partner 15 (374 aa).

In terms of domain architecture, F-box spans 3-48; it reads SSPVNCLPPDSLHQIFSSLPIRDIMICRSVCKFFNQLLTSQCFIEI.

In terms of assembly, part of a SCF (ASK-cullin-F-box) protein ligase complex. Interacts with SKP1A/ASK1, SKP1B/ASK2, ASK11 and ASK13.

Its subcellular location is the nucleus. The protein operates within protein modification; protein ubiquitination. Component of SCF(ASK-cullin-F-box) E3 ubiquitin ligase complexes, which may mediate the ubiquitination and subsequent proteasomal degradation of target proteins. The chain is SKP1-interacting partner 15 (SKIP15) from Arabidopsis thaliana (Mouse-ear cress).